A 268-amino-acid polypeptide reads, in one-letter code: Orotidine 5'-phosphate decarboxylase (268 aa).

Residues Asp-38, 60 to 62, 92 to 101, Tyr-218, and Arg-236 each bind substrate; these read KTH and DRKFADIGNT. Lys-94 acts as the Proton donor in catalysis.

This sequence belongs to the OMP decarboxylase family.

The catalysed reaction is orotidine 5'-phosphate + H(+) = UMP + CO2. Its pathway is pyrimidine metabolism; UMP biosynthesis via de novo pathway; UMP from orotate: step 2/2. This Candida parapsilosis (Yeast) protein is Orotidine 5'-phosphate decarboxylase (URA3).